The primary structure comprises 299 residues: Ribonuclease 3-like protein 3 (299 aa).

Positions 39–183 constitute an RNase III domain; it reads VAAVESLLGY…LIGAIYCDSN (145 aa). 3 residues coordinate Mg(2+): Glu-79, Asp-169, and Glu-172. Residues 209–273 enclose the DRBM domain; sequence HPVSELFEFC…AKAALDKLKE (65 aa). Residues 274-299 are disordered; the sequence is TLGQSQTEPMSAEVSEQFNKIDLTGS. Residues 275–291 show a composition bias toward polar residues; that stretch reads LGQSQTEPMSAEVSEQF.

Mg(2+) serves as cofactor. Mn(2+) is required as a cofactor.

Functionally, cleaves double-stranded RNA (dsRNA). The chain is Ribonuclease 3-like protein 3 from Oryza sativa subsp. japonica (Rice).